The following is a 242-amino-acid chain: Protein FsrB (242 aa).

Transmembrane regions (helical) follow at residues 29-49 (LTVY…SVLF), 52-72 (LSET…AGGW), 78-95 (WLCR…PFVL), 100-120 (VSLP…LFYW), and 160-180 (KIAS…LPVT).

The protein belongs to the AgrB family.

The protein localises to the cell membrane. May be involved in the proteolytic processing of a quorum sensing system signal molecule precursor required for the regulation of the virulence genes for gelatinase (gelE) and a serine protease (sprE). The polypeptide is Protein FsrB (fsrB) (Enterococcus faecalis (strain ATCC 47077 / OG1RF)).